The chain runs to 384 residues: Aryl-alcohol dehydrogenase GME11368 (384 aa).

Position 69 (Asp-69) interacts with NADP(+). The Proton donor role is filled by Tyr-74. NADP(+) is bound by residues 177 to 178 (SD), Gln-203, and 301 to 309 (RKPEHLKAN).

This sequence belongs to the aldo/keto reductase family. Aldo/keto reductase 2 subfamily.

It participates in secondary metabolite biosynthesis. Functionally, aryl-alcohol dehydrogenase; part of the gene cluster that mediates the biosynthesis of dibenzodioxocinones such as pestalotiollide B, a novel class of inhibitors against cholesterol ester transfer protein (CEPT). The biosynthesis initiates from condensation of acetate and malonate units catalyzed by the non-reducing PKS pks8/GME11356. Pks8/GME11356 lacks a thioesterase (TE) domain, which is important to the cyclizing of the third ring of atrochrysone carboxylic acid, and the esterase GME11355 might play the role of TE and catalyzes the cyclization reaction of the C ring. The lactamase-like protein GME11357 (or other beta-lactamases in Pestalotiopsis microspora) probably hydrolyzes the thioester bond between the ACP of pks8/GME11356 and the intermediate to release atrochrysone carboxylic acid, which is spontaneously dehydrates to form endocrocin anthrone. Endocrocin anthrone is further converted to emodin via the endocrocin intermediate. Emodin is then oxidized by several enzymes such as the Baeyer-Villiger oxidase GME11358, the oxidoreductase GME11367, the short chain dehydrogenase/reductase GME11373, as well as by other oxidoreductases from the cluster, to modify the A and C rings and open the B ring, and finally yield monodictyphenone. The prenyltransferase GME11375 may catalyze the addition reaction between the C5 side chains and the carbon bone of dibenzodioxocinones. The remaining biochemical reactions to the final product dibenzodioxocinones should be methylation catalyzed by methyltransferase GME11366 and reduction and lactonization reaction catalyzed by a series of oxidordeuctases. This chain is Aryl-alcohol dehydrogenase GME11368, found in Pestalotiopsis microspora.